Reading from the N-terminus, the 205-residue chain is Urease accessory protein UreE (205 aa).

The segment at 171–205 (AHEAHPHAHSHAGGHGHVHSGHGHGGKHGEHDAES) is disordered. The span at 177 to 196 (HAHSHAGGHGHVHSGHGHGG) shows a compositional bias: basic residues.

Belongs to the UreE family.

Its subcellular location is the cytoplasm. Its function is as follows. Involved in urease metallocenter assembly. Binds nickel. Probably functions as a nickel donor during metallocenter assembly. The polypeptide is Urease accessory protein UreE (Bordetella parapertussis (strain 12822 / ATCC BAA-587 / NCTC 13253)).